Reading from the N-terminus, the 103-residue chain is Large ribosomal subunit protein bL21 (103 aa).

It belongs to the bacterial ribosomal protein bL21 family. Part of the 50S ribosomal subunit. Contacts protein L20.

In terms of biological role, this protein binds to 23S rRNA in the presence of protein L20. This Nitrosomonas europaea (strain ATCC 19718 / CIP 103999 / KCTC 2705 / NBRC 14298) protein is Large ribosomal subunit protein bL21.